The primary structure comprises 194 residues: dCTP deaminase (194 aa).

DCTP is bound by residues Arg-110 to Arg-115, Asp-128, Val-136 to Glu-138, Tyr-171, Lys-178, and Gln-182. The active-site Proton donor/acceptor is the Glu-138.

This sequence belongs to the dCTP deaminase family. As to quaternary structure, homotrimer.

The catalysed reaction is dCTP + H2O + H(+) = dUTP + NH4(+). Its pathway is pyrimidine metabolism; dUMP biosynthesis; dUMP from dCTP (dUTP route): step 1/2. Catalyzes the deamination of dCTP to dUTP. This chain is dCTP deaminase, found in Haemophilus ducreyi (strain 35000HP / ATCC 700724).